The sequence spans 313 residues: NAD-capped RNA hydrolase NudC (313 aa).

Arg111 contributes to the substrate binding site. The Nudix hydrolase domain maps to 168–293 (PRIDPAVICL…DWSSASESKL (126 aa)). Residues Ala202, Glu218, and Glu222 each coordinate a divalent metal cation. A Nudix box motif is present at residues 203–224 (GFVEAGESFEVCVAREIREEIG). Residue 236–243 (QQWPFPRS) coordinates substrate. Glu264 contributes to the a divalent metal cation binding site.

Belongs to the Nudix hydrolase family. NudC subfamily. As to quaternary structure, homodimer. Requires Mg(2+) as cofactor. Mn(2+) is required as a cofactor.

The enzyme catalyses a 5'-end NAD(+)-phospho-ribonucleoside in mRNA + H2O = a 5'-end phospho-adenosine-phospho-ribonucleoside in mRNA + beta-nicotinamide D-ribonucleotide + 2 H(+). The catalysed reaction is NAD(+) + H2O = beta-nicotinamide D-ribonucleotide + AMP + 2 H(+). It carries out the reaction NADH + H2O = reduced beta-nicotinamide D-ribonucleotide + AMP + 2 H(+). MRNA decapping enzyme that specifically removes the nicotinamide adenine dinucleotide (NAD) cap from a subset of mRNAs by hydrolyzing the diphosphate linkage to produce nicotinamide mononucleotide (NMN) and 5' monophosphate mRNA. The NAD-cap is present at the 5'-end of some mRNAs and stabilizes RNA against 5'-processing. Has preference for mRNAs with a 5'-end purine. Catalyzes the hydrolysis of a broad range of dinucleotide pyrophosphates. This Mycobacterium tuberculosis (strain ATCC 25177 / H37Ra) protein is NAD-capped RNA hydrolase NudC.